The chain runs to 114 residues: Superoxide dismutase [Cu-Zn] (114 aa).

Cu cation contacts are provided by H37, H39, and H54. The disordered stretch occupies residues 48–68 (CMSSGPHFNPRNKEHGAPTDE). Zn(2+)-binding residues include H54, H62, H71, and D74. Residues 58 to 68 (RNKEHGAPTDE) show a composition bias toward basic and acidic residues. H111 contributes to the Cu cation binding site.

This sequence belongs to the Cu-Zn superoxide dismutase family. As to quaternary structure, homodimer. Requires Cu cation as cofactor. It depends on Zn(2+) as a cofactor.

The protein localises to the cytoplasm. The enzyme catalyses 2 superoxide + 2 H(+) = H2O2 + O2. Its function is as follows. Destroys radicals which are normally produced within the cells and which are toxic to biological systems. This chain is Superoxide dismutase [Cu-Zn], found in Drosophila miranda (Fruit fly).